A 327-amino-acid chain; its full sequence is Pyruvate dehydrogenase E1 component subunit beta (327 aa).

Glutamate 60 is a thiamine diphosphate binding site. K(+) contacts are provided by valine 113, alanine 161, isoleucine 162, and glutamate 164.

As to quaternary structure, heterodimer of an alpha and a beta chain. The cofactor is thiamine diphosphate.

Its subcellular location is the plastid. It is found in the chloroplast. The catalysed reaction is N(6)-[(R)-lipoyl]-L-lysyl-[protein] + pyruvate + H(+) = N(6)-[(R)-S(8)-acetyldihydrolipoyl]-L-lysyl-[protein] + CO2. Its function is as follows. The pyruvate dehydrogenase complex catalyzes the overall conversion of pyruvate to acetyl-CoA and CO(2). It contains multiple copies of three enzymatic components: pyruvate dehydrogenase (E1), dihydrolipoamide acetyltransferase (E2) and lipoamide dehydrogenase (E3). This Cyanidium caldarium (Red alga) protein is Pyruvate dehydrogenase E1 component subunit beta (pdhB).